Here is a 239-residue protein sequence, read N- to C-terminus: MLMSKYKRILLKLSGEALANTENIIDPVALNKVVNIIKSVLSQNVEIAIVVGGGNIFRGAVLAQAGMNRITGDHMGMLATVMNALAIADVCQKNKVDTLVMSGFSIGGGVCDSINHVHAKQALNEGKVVIFCAGTGSPCFTTDTGAALRAIEIDADAVFKATKVDGIYTSDPIKNSDAKRYDSLSFDGAIEKNLQIMDVSAFALCREHDLEICVFSMLENTNTLSDILKGKPLGTIVRK.

12-15 (KLSG) is a binding site for ATP. Position 53 (Gly53) interacts with UMP. Gly54 and Arg58 together coordinate ATP. UMP-binding positions include Asp73 and 135–142 (TGSPCFTT). Residues Thr162, Tyr168, and Asp171 each contribute to the ATP site.

This sequence belongs to the UMP kinase family. Homohexamer.

It is found in the cytoplasm. It catalyses the reaction UMP + ATP = UDP + ADP. The protein operates within pyrimidine metabolism; CTP biosynthesis via de novo pathway; UDP from UMP (UMPK route): step 1/1. Its activity is regulated as follows. Inhibited by UTP. In terms of biological role, catalyzes the reversible phosphorylation of UMP to UDP. This Ruthia magnifica subsp. Calyptogena magnifica protein is Uridylate kinase.